Here is a 714-residue protein sequence, read N- to C-terminus: MEGTAQNLDVEVPKQDLPNGTDSTGEPPLKKVRLEEPASDQQNGQAPPRLKGVAPIKAEFLIPKPKQGQAAVSSTDDAAEAAAYKDREDEKKGKKKKTTGQNKNRTFGRSQDSKGLCASRVYSPEFSPAECPFGDKCRFEHDLRTYLKEHKREDLNTFNGVCPVWSARGKCDAGWKCRFVGSHSIERVTEDGRKELVLVEDEERRKKAQPVFPSAAEDGTVNTTSPADKIALAKRQRPTPRADAYSDWLDLTSKELEKYFHGGQQNKDAHPDTAQDKEEKEENRATYTEAPFMPSEKRRLYFGPETPALAPLTTQGNLPFRRLCVELGAQLTYSEMALSMPLIQGHKPEWALMRAHETEALPPTVSARASVVQDYDNSKDMKFGAQIAGNKYRWVMKATEVLSSLTPNLRVIDLNCGCPIDLLYREGSGSALLDAPSKLEKMLRGMNAVSEQIPITVKIRTGTRDNTPNAQKLVERLILGGHEASMLNCGPSGVAAITLHGRSRQQRYTREANWEYISETAALIKRLNEKSDEVTDTIREPEERMRPNGGKTWFLGNGDCYSHVDYEDHIKNAKVDSVMVGRGALIKPWLFEEIQAGQYLDKSASERLAYVEKFARYGMETWGSDEYGIGITRRFLLEWLSFACRYVPIGLLEYLPPKINDRPPYWRGRNDMETLMGSHDYRDWIKISEMFLGPAHKDFKFEPKHKSNSYDTEG.

Residues 1–111 (MEGTAQNLDV…NKNRTFGRSQ (111 aa)) are disordered. Basic and acidic residues predominate over residues 83–92 (AYKDREDEKK). 2 consecutive C3H1-type zinc fingers follow at residues 111-144 (QDSK…HDLR) and 161-186 (VCPV…HSIE). Disordered stretches follow at residues 202 to 238 (EERR…RQRP) and 261 to 285 (HGGQ…ENRA). Positions 267-284 (KDAHPDTAQDKEEKEENR) are enriched in basic and acidic residues. FMN-binding positions include 311–313 (PLT) and Gln-386. Cys-418 functions as the Proton donor in the catalytic mechanism. FMN-binding positions include Lys-458, His-500, 557–559 (NGD), and 581–582 (GR).

The protein belongs to the Dus family. Dus3 subfamily. The cofactor is FMN.

Its subcellular location is the cytoplasm. The protein localises to the nucleus. It carries out the reaction 5,6-dihydrouridine(47) in tRNA + NAD(+) = uridine(47) in tRNA + NADH + H(+). The enzyme catalyses 5,6-dihydrouridine(47) in tRNA + NADP(+) = uridine(47) in tRNA + NADPH + H(+). It catalyses the reaction a 5,6-dihydrouridine in mRNA + NAD(+) = a uridine in mRNA + NADH + H(+). The catalysed reaction is a 5,6-dihydrouridine in mRNA + NADP(+) = a uridine in mRNA + NADPH + H(+). Its function is as follows. Catalyzes the synthesis of dihydrouridine, a modified base found in the D-loop of most tRNAs. Specifically modifies U47 in cytoplasmic tRNAs. Catalyzes the synthesis of dihydrouridine in some mRNAs, thereby affecting their translation. The protein is tRNA-dihydrouridine(47) synthase [NAD(P)(+)] (dus3) of Emericella nidulans (strain FGSC A4 / ATCC 38163 / CBS 112.46 / NRRL 194 / M139) (Aspergillus nidulans).